Consider the following 349-residue polypeptide: Peptide chain release factor 1 (349 aa).

Gln-233 carries the N5-methylglutamine modification.

This sequence belongs to the prokaryotic/mitochondrial release factor family. Methylated by PrmC. Methylation increases the termination efficiency of RF1.

The protein localises to the cytoplasm. Its function is as follows. Peptide chain release factor 1 directs the termination of translation in response to the peptide chain termination codons UAG and UAA. The chain is Peptide chain release factor 1 from Pelotomaculum thermopropionicum (strain DSM 13744 / JCM 10971 / SI).